Here is a 138-residue protein sequence, read N- to C-terminus: ATP synthase epsilon chain (138 aa).

Belongs to the ATPase epsilon chain family. F-type ATPases have 2 components, CF(1) - the catalytic core - and CF(0) - the membrane proton channel. CF(1) has five subunits: alpha(3), beta(3), gamma(1), delta(1), epsilon(1). CF(0) has three main subunits: a, b and c.

The protein localises to the cell membrane. In terms of biological role, produces ATP from ADP in the presence of a proton gradient across the membrane. The chain is ATP synthase epsilon chain (atpC) from Streptococcus mutans serotype c (strain ATCC 700610 / UA159).